The sequence spans 284 residues: MDGIKKKMIAMKLEKENAMERAVQYEELLKKKEEEREKRENEISELNTKMKQAQIDCDEVQETLQEQMNKLEETEKRATNAEAQVAAMTRRIRLLEEDLEVSSSRLTETLTKLEEASKTAEESERGRKDLEIRSIADDERLNQLEDQQKEAKYIAEDADRKYDEAARKLAIAEVDFERAEARLEAAESKIVELEEELRVVGNNMKALEISEQESAQREESYEETIRDLTERLKAAEQRATEAERQVSKLQNEVDHLEDDLLAEKERYKALSGELDQTFAELTGY.

The stretch at 1 to 284 forms a coiled coil; the sequence is MDGIKKKMIA…DQTFAELTGY (284 aa). Positions 111-131 are disordered; sequence TKLEEASKTAEESERGRKDLE.

This sequence belongs to the tropomyosin family. Homodimer.

In terms of biological role, tropomyosin, in association with the troponin complex, plays a central role in the calcium dependent regulation of muscle contraction. The sequence is that of Tropomyosin from Schistosoma japonicum (Blood fluke).